The sequence spans 58 residues: uncharacterized protein (58 aa).

The helical transmembrane segment at 5 to 27 (FLHANITIIPHSVLYVSLSYYII) threads the bilayer.

It is found in the membrane. This is an uncharacterized protein from Saccharomyces cerevisiae (strain ATCC 204508 / S288c) (Baker's yeast).